The sequence spans 1507 residues: ABC multidrug transporter SNQ2 (1507 aa).

Residues 1–73 (MSSSSEISVA…RSSTAELSPE (73 aa)) are disordered. The span at 41-55 (RSHEDADGDDAHSDN) shows a compositional bias: basic and acidic residues. N-linked (GlcNAc...) asparagine glycosylation is found at asparagine 55 and asparagine 336. Residues 157 to 412 (CLPYTIYKAI…FYRMGYECPP (256 aa)) enclose the ABC transporter 1 domain. 3 helical membrane passes run 522–542 (AYTV…GSLY), 556–576 (GGVL…NLSF), and 605–625 (FPFR…LSGL). Asparagine 626 is a glycosylation site (N-linked (GlcNAc...) asparagine). A helical transmembrane segment spans residues 635–655 (VYLFLTMCSESINALFELIAA). N-linked (GlcNAc...) asparagine glycosylation is present at asparagine 659. 2 consecutive transmembrane segments (helical) span residues 665–685 (SISG…IQLP) and 773–793 (FGIM…ITEI). The 243-residue stretch at 857–1099 (FIWRNVCYTI…LLSYFERNGA (243 aa)) folds into the ABC transporter 2 domain. Asparagine 878 carries N-linked (GlcNAc...) asparagine glycosylation. An ATP-binding site is contributed by 893 to 900 (GESGAGKT). 3 consecutive transmembrane segments (helical) span residues 1193–1213 (YIMS…FTFY), 1220–1240 (TGLQ…APAM), and 1270–1290 (LITQ…IFFV). An N-linked (GlcNAc...) asparagine glycan is attached at asparagine 1311. 2 helical membrane-spanning segments follow: residues 1314–1334 (IMFQ…APNL) and 1339–1359 (VILG…QPVS). N-linked (GlcNAc...) asparagine glycosylation occurs at asparagine 1428. The helical transmembrane segment at 1459-1479 (FGLYWAYIGFNICAMVAIYYI) threads the bilayer.

This sequence belongs to the ABC transporter superfamily. ABCG family. PDR (TC 3.A.1.205) subfamily.

The protein resides in the cell membrane. In terms of biological role, ABC multidrug transporter involved in the response to azoles such as fluconazole, itraconazole, ketoconazole and voriconazole and contributes to the development of PDR1-dependent azole resistance. Plays a role in biofilm tolerance to fluconazole. Also confers resistance to 4-nitroquinoline-N-oxide (4-NQO). The chain is ABC multidrug transporter SNQ2 from Candida glabrata (strain ATCC 2001 / BCRC 20586 / JCM 3761 / NBRC 0622 / NRRL Y-65 / CBS 138) (Yeast).